An 85-amino-acid chain; its full sequence is UPF0291 protein SP_1473 (85 aa).

Positions Thr-62–Ser-85 are disordered.

The protein belongs to the UPF0291 family.

It is found in the cytoplasm. In Streptococcus pneumoniae serotype 4 (strain ATCC BAA-334 / TIGR4), this protein is UPF0291 protein SP_1473.